A 156-amino-acid chain; its full sequence is Arginine repressor (156 aa).

Belongs to the ArgR family.

It is found in the cytoplasm. Its pathway is amino-acid biosynthesis; L-arginine biosynthesis [regulation]. In terms of biological role, regulates arginine biosynthesis genes. This Yersinia pseudotuberculosis serotype I (strain IP32953) protein is Arginine repressor.